The chain runs to 72 residues: Translation initiation factor IF-1 (72 aa).

Residues 1 to 72 form the S1-like domain; the sequence is MAKEEAIEIE…SKGRITYRYK (72 aa).

Belongs to the IF-1 family. As to quaternary structure, component of the 30S ribosomal translation pre-initiation complex which assembles on the 30S ribosome in the order IF-2 and IF-3, IF-1 and N-formylmethionyl-tRNA(fMet); mRNA recruitment can occur at any time during PIC assembly.

The protein resides in the cytoplasm. One of the essential components for the initiation of protein synthesis. Stabilizes the binding of IF-2 and IF-3 on the 30S subunit to which N-formylmethionyl-tRNA(fMet) subsequently binds. Helps modulate mRNA selection, yielding the 30S pre-initiation complex (PIC). Upon addition of the 50S ribosomal subunit IF-1, IF-2 and IF-3 are released leaving the mature 70S translation initiation complex. The polypeptide is Translation initiation factor IF-1 (Chlorobium luteolum (strain DSM 273 / BCRC 81028 / 2530) (Pelodictyon luteolum)).